The primary structure comprises 361 residues: Aminomethyltransferase (361 aa).

The protein belongs to the GcvT family. In terms of assembly, the glycine cleavage system is composed of four proteins: P, T, L and H.

The enzyme catalyses N(6)-[(R)-S(8)-aminomethyldihydrolipoyl]-L-lysyl-[protein] + (6S)-5,6,7,8-tetrahydrofolate = N(6)-[(R)-dihydrolipoyl]-L-lysyl-[protein] + (6R)-5,10-methylene-5,6,7,8-tetrahydrofolate + NH4(+). Functionally, the glycine cleavage system catalyzes the degradation of glycine. This is Aminomethyltransferase from Phocaeicola vulgatus (strain ATCC 8482 / DSM 1447 / JCM 5826 / CCUG 4940 / NBRC 14291 / NCTC 11154) (Bacteroides vulgatus).